The following is a 783-amino-acid chain: uncharacterized protein (783 aa).

The segment at 1-22 is disordered; sequence MVNTRGYTTLPNVEEPANNSQD. The Cytoplasmic portion of the chain corresponds to 1–109; the sequence is MVNTRGYTTL…SKIGNVMVMR (109 aa). A helical; Signal-anchor for type II membrane protein transmembrane segment spans residues 110–127; the sequence is RIFYIMMMSIIAALIIAS. The Extracellular segment spans residues 128–783; the sequence is DRLPNGKARG…NLHGINTNEF (656 aa). Residues N139 and N213 are each glycosylated (N-linked (GlcNAc...) asparagine). One can recognise a PA domain in the interval 241–333; sequence HNGQLNNIPV…GTGDALTPEW (93 aa). An N-linked (GlcNAc...) asparagine glycan is attached at N529.

The protein localises to the cell membrane. This is an uncharacterized protein from Saccharomyces cerevisiae (strain ATCC 204508 / S288c) (Baker's yeast).